We begin with the raw amino-acid sequence, 263 residues long: LIM and SH3 domain protein 1 (263 aa).

Position 1 is an N-acetylmethionine (methionine 1). Residues 5–56 enclose the LIM zinc-binding domain; it reads CARCGKIVYPTEKVNCLDKYWHKACFHCETCKMTLNMKNYKGYEKKPYCNAH. Lysine 42 bears the N6-acetyllysine mark. Nebulin repeat units lie at residues 61–95 and 97–131; these read SFTM…KNKG and GFSV…KSRM. Threonine 68 carries the phosphothreonine modification. Lysine 75 carries the N6-methyllysine modification. Residue serine 99 is modified to Phosphoserine. A Phosphothreonine modification is found at threonine 104. An N6-succinyllysine modification is found at lysine 112. Residues serine 118 and serine 134 each carry the phosphoserine modification. Residues 123–207 form a disordered region; it reads HEEFEKSRMG…QRSAPGGGGK (85 aa). Positions 148-162 are enriched in polar residues; the sequence is DSSSYRRPTEQQQPQ. A Phosphothreonine; by PKA modification is found at threonine 156. The region spanning 204 to 263 is the SH3 domain; sequence GGGKRYRAVYDYSAADEDEVSFQDGDTIVNVQQIDDGWMYGTVERTGDTGMLPANYVEAI.

As to quaternary structure, interacts with F-actin. Interacts with KBTBD10. Interacts with ANKRD54.

It is found in the cytoplasm. Its subcellular location is the cell cortex. The protein localises to the cytoskeleton. Functionally, plays an important role in the regulation of dynamic actin-based, cytoskeletal activities. Agonist-dependent changes in LASP1 phosphorylation may also serve to regulate actin-associated ion transport activities, not only in the parietal cell but also in certain other F-actin-rich secretory epithelial cell types. The polypeptide is LIM and SH3 domain protein 1 (Lasp1) (Mus musculus (Mouse)).